The following is a 485-amino-acid chain: MIKKKNSPADKYLIKSQIGSGSYGNTFKVTHKESGQVFCKKSIQVNNQENIEKVLEEGKILTVMDHVNVVKLNDSFFENGNYVIIMEFAENGDLFQKIENQKRSGKPFSDFEIMHYFCQLVIALNYIHSQNIIHRDIKPKNIVLSSSDSGSGSGSGSGSSNDSIPLLKIADFGVSKLMSETDLYANTTAGTPQYVSYEICNKKPYTNKTDIWSLGVVLYELMTLSLPFDGRKETVMRNIQTESTIFKPVNHPNEELSSLLFKLLNKNPESRFSTQQILEQVFIREFIENHMVDFYKRFNFSIDGIFKVISKKLNLAGLNLTKEEKDNLEHKFIFTKMQEMKDRMKAFDTNHINKNQQQQSPQKLENNNNNNNDNNNNNNNNNNNNNNNNNNNNNNNNNNNNNNNNNNNNNNDKNNNINNNVNYNVLKKVSVELGFNLDNYCYDTDGMLIELVRSKLEGKDRKTYSKCYNYLSNKQSAFTNTNNEY.

The Protein kinase domain occupies 12–283 (YLIKSQIGSG…TQQILEQVFI (272 aa)). Residues 18–26 (IGSGSYGNT) and lysine 41 each bind ATP. Aspartate 136 (proton acceptor) is an active-site residue. Residues 354 to 365 (KNQQQQSPQKLE) are compositionally biased toward polar residues. The interval 354-419 (KNQQQQSPQK…NNDKNNNINN (66 aa)) is disordered. The segment covering 366-419 (NNNNNNNDNNNNNNNNNNNNNNNNNNNNNNNNNNNNNNNNNNNNNNDKNNNINN) has biased composition (low complexity).

The protein belongs to the protein kinase superfamily. NEK Ser/Thr protein kinase family. NIMA subfamily.

It catalyses the reaction L-seryl-[protein] + ATP = O-phospho-L-seryl-[protein] + ADP + H(+). The catalysed reaction is L-threonyl-[protein] + ATP = O-phospho-L-threonyl-[protein] + ADP + H(+). The sequence is that of Probable serine/threonine-protein kinase nek1 (nek1) from Dictyostelium discoideum (Social amoeba).